A 440-amino-acid polypeptide reads, in one-letter code: GTPase Obg (440 aa).

Positions 5–163 (STFVDQTKIE…RTLRLELKVL (159 aa)) constitute an Obg domain. In terms of domain architecture, OBG-type G spans 164–338 (ADVGLVGFPS…LMSRAADLVS (175 aa)). Residues 170-177 (GFPSVGKS), 195-199 (FTTLK), 217-220 (DLPG), 288-291 (SQMD), and 319-321 (SSV) each bind GTP. Positions 177 and 197 each coordinate Mg(2+). In terms of domain architecture, OCT spans 362 to 440 (YHRPEKMEFT…IGDFSFEFVQ (79 aa)).

Belongs to the TRAFAC class OBG-HflX-like GTPase superfamily. OBG GTPase family. Monomer. Requires Mg(2+) as cofactor.

It is found in the cytoplasm. In terms of biological role, an essential GTPase which binds GTP, GDP and possibly (p)ppGpp with moderate affinity, with high nucleotide exchange rates and a fairly low GTP hydrolysis rate. Plays a role in control of the cell cycle, stress response, ribosome biogenesis and in those bacteria that undergo differentiation, in morphogenesis control. The chain is GTPase Obg from Lactobacillus delbrueckii subsp. bulgaricus (strain ATCC BAA-365 / Lb-18).